A 488-amino-acid chain; its full sequence is Glutamyl-tRNA(Gln) amidotransferase subunit A (488 aa).

Catalysis depends on charge relay system residues lysine 79 and serine 159. The Acyl-ester intermediate role is filled by serine 183.

This sequence belongs to the amidase family. GatA subfamily. In terms of assembly, heterotrimer of A, B and C subunits.

The catalysed reaction is L-glutamyl-tRNA(Gln) + L-glutamine + ATP + H2O = L-glutaminyl-tRNA(Gln) + L-glutamate + ADP + phosphate + H(+). Allows the formation of correctly charged Gln-tRNA(Gln) through the transamidation of misacylated Glu-tRNA(Gln) in organisms which lack glutaminyl-tRNA synthetase. The reaction takes place in the presence of glutamine and ATP through an activated gamma-phospho-Glu-tRNA(Gln). The protein is Glutamyl-tRNA(Gln) amidotransferase subunit A of Wolbachia pipientis subsp. Culex pipiens (strain wPip).